The chain runs to 450 residues: Phospho-2-dehydro-3-deoxyheptonate aldolase (450 aa).

Polar residues predominate over residues 1 to 13 (MTVNAKTSPSAGN). The disordered stretch occupies residues 1-20 (MTVNAKTSPSAGNTWRDLPA).

The protein belongs to the class-II DAHP synthase family. Homodimer.

It carries out the reaction D-erythrose 4-phosphate + phosphoenolpyruvate + H2O = 7-phospho-2-dehydro-3-deoxy-D-arabino-heptonate + phosphate. Its pathway is metabolic intermediate biosynthesis; chorismate biosynthesis; chorismate from D-erythrose 4-phosphate and phosphoenolpyruvate: step 1/7. In Streptomyces coelicolor (strain ATCC BAA-471 / A3(2) / M145), this protein is Phospho-2-dehydro-3-deoxyheptonate aldolase (aroH).